We begin with the raw amino-acid sequence, 238 residues long: Probable transcriptional regulatory protein ABC1956 (238 aa).

It belongs to the TACO1 family. YeeN subfamily.

The protein resides in the cytoplasm. The polypeptide is Probable transcriptional regulatory protein ABC1956 (Shouchella clausii (strain KSM-K16) (Alkalihalobacillus clausii)).